Here is a 215-residue protein sequence, read N- to C-terminus: MGKVYDWFEERLEIQAIADDITSKYVPPHVNIFYCLGGITLTCFLVQVATGFAMTFYYRPTVTEAFSSVQYIMTEVNFGWLIRSVHRWSASMMVLMMILHIFRVYLTGGFKKPRELTWVTGVILAVLTVSFGVTGYSLPWDQIGYWAVKIVTGVPEAIPIIGSPLVELLRGSVSVGQSTLTRFYSLHTFVLPLLTAIFMLMHFLMIRKQGISGPL.

A helical membrane pass occupies residues 32–52 (IFYCLGGITLTCFLVQVATGF). Cys35 provides a ligand contact to heme c. Heme b-binding residues include His86 and His100. 3 helical membrane-spanning segments follow: residues 90–110 (ASMM…TGGF), 116–136 (LTWV…VTGY), and 186–206 (LHTF…FLMI). Residues His187 and His202 each coordinate heme b.

It belongs to the cytochrome b family. PetB subfamily. As to quaternary structure, the 4 large subunits of the cytochrome b6-f complex are cytochrome b6, subunit IV (17 kDa polypeptide, PetD), cytochrome f and the Rieske protein, while the 4 small subunits are PetG, PetL, PetM and PetN. The complex functions as a dimer. It depends on heme b as a cofactor. Requires heme c as cofactor.

The protein resides in the plastid. It localises to the chloroplast thylakoid membrane. Its function is as follows. Component of the cytochrome b6-f complex, which mediates electron transfer between photosystem II (PSII) and photosystem I (PSI), cyclic electron flow around PSI, and state transitions. This is Cytochrome b6 from Marchantia polymorpha (Common liverwort).